Here is a 327-residue protein sequence, read N- to C-terminus: Sideroflexin FSF1 (327 aa).

Alanine 2 carries the N-acetylalanine modification. A run of 4 helical transmembrane segments spans residues 98–118 (NLVV…TVFW), 143–163 (SQLL…ALGL), 179–199 (LILG…VNVF), and 272–292 (ANLG…LGIF).

The protein belongs to the sideroflexin family.

Its subcellular location is the mitochondrion membrane. Functionally, mitochondrial amino-acid transporter that mediates transport of serine into mitochondria. The chain is Sideroflexin FSF1 from Saccharomyces cerevisiae (strain ATCC 204508 / S288c) (Baker's yeast).